Consider the following 240-residue polypeptide: PF03932 family protein CutC (240 aa).

This sequence belongs to the CutC family.

It is found in the cytoplasm. This chain is PF03932 family protein CutC, found in Xanthomonas campestris pv. campestris (strain B100).